We begin with the raw amino-acid sequence, 522 residues long: E3 ubiquitin-protein ligase DMA2 (522 aa).

2 disordered regions span residues 1-56 (MYTP…RPAS) and 69-92 (QNSQ…PSNS). The segment covering 14-35 (APTSSMTSNSSSASNANTTSSS) has biased composition (low complexity). Over residues 36–49 (GINPRNRASGTPSN) the composition is skewed to polar residues. A Phosphoserine modification is found at S206. Residues K211, K256, K258, K288, K310, K333, K343, K346, K366, K406, K412, and K423 each participate in a glycyl lysine isopeptide (Lys-Gly) (interchain with G-Cter in ubiquitin) cross-link. An FHA domain is found at 295-358 (LVIGRYTERV…SGTFLNHQRL (64 aa)). The RING-type zinc finger occupies 433 to 477 (CSICLCKIKPCQAIFISPCAHSWHFRCVRRLVMLSYPQFVCPNCR).

This sequence belongs to the DMA1 family. Post-translationally, UBC4-dependent autoubiquitination occurs at Lys-211, Lys-258, Lys-288, Lys-310, Lys-333, Lys-343, Lys-346, Lys-366, Lys-406, Lys-412 and Lys-423. UBC4-dependent autoubiquitination is responsible for DMA2 turnover. UBC13/MMS2-dependent autoubiquitination occurs at Lys-258, Lys-310, Lys-346 and Lys-366. Lys-211, Lys-256, Lys-288, Lys-310, Lys-343, Lys-258, Lys-366 and Lys-412 are also ubiquitinated in trans by DMA1 E3 ligase in association with UBC4.

It is found in the cytoplasm. It carries out the reaction S-ubiquitinyl-[E2 ubiquitin-conjugating enzyme]-L-cysteine + [acceptor protein]-L-lysine = [E2 ubiquitin-conjugating enzyme]-L-cysteine + N(6)-ubiquitinyl-[acceptor protein]-L-lysine.. In terms of biological role, E3 ubiquitin-protein ligase which functions in cell cycle retarding in conjunction with the UBC4 and UBC13/MMS2 complex, 2 E2 ubiquitin conjugating enzymes. Involved in nutritional control of the cell cycle. Required for proper spindle positioning, likely regulating septin ring deposition at the bud neck. The chain is E3 ubiquitin-protein ligase DMA2 (DMA2) from Saccharomyces cerevisiae (strain ATCC 204508 / S288c) (Baker's yeast).